Here is a 289-residue protein sequence, read N- to C-terminus: Phytoene synthase (289 aa).

It belongs to the phytoene/squalene synthase family. Requires ATP as cofactor. Mn(2+) is required as a cofactor. The cofactor is Mg(2+).

Its pathway is carotenoid biosynthesis; phytoene biosynthesis. Involved in the biosynthesis of carotenoids. Catalyzes the condensation of two molecules of geranylgeranyl diphosphate (GGPP) to give prephytoene diphosphate (PPPP) and the subsequent rearrangement of the cyclopropylcarbinyl intermediate to yield phytoene. This is Phytoene synthase (crtB) from Thermus thermophilus (strain ATCC BAA-163 / DSM 7039 / HB27).